Consider the following 434-residue polypeptide: Serine--tRNA ligase (434 aa).

Position 241–243 (241–243 (TAE)) interacts with L-serine. ATP is bound at residue 272–274 (RSE). Glu-295 provides a ligand contact to L-serine. 359 to 362 (EISS) lines the ATP pocket. Ser-395 is an L-serine binding site.

This sequence belongs to the class-II aminoacyl-tRNA synthetase family. Type-1 seryl-tRNA synthetase subfamily. Homodimer. The tRNA molecule binds across the dimer.

Its subcellular location is the cytoplasm. It catalyses the reaction tRNA(Ser) + L-serine + ATP = L-seryl-tRNA(Ser) + AMP + diphosphate + H(+). It carries out the reaction tRNA(Sec) + L-serine + ATP = L-seryl-tRNA(Sec) + AMP + diphosphate + H(+). It participates in aminoacyl-tRNA biosynthesis; selenocysteinyl-tRNA(Sec) biosynthesis; L-seryl-tRNA(Sec) from L-serine and tRNA(Sec): step 1/1. In terms of biological role, catalyzes the attachment of serine to tRNA(Ser). Is also able to aminoacylate tRNA(Sec) with serine, to form the misacylated tRNA L-seryl-tRNA(Sec), which will be further converted into selenocysteinyl-tRNA(Sec). This Glaesserella parasuis serovar 5 (strain SH0165) (Haemophilus parasuis) protein is Serine--tRNA ligase.